The sequence spans 947 residues: Plasma membrane ATPase 2 (947 aa).

The segment at 1 to 103 (MSSTEAKQYK…TDGVHAGQRV (103 aa)) is disordered. Residues 1–144 (MSSTEAKQYK…AEENESLIVK (144 aa)) lie on the Cytoplasmic side of the membrane. The span at 7–22 (KQYKEKPSKEYLHASD) shows a compositional bias: basic and acidic residues. Residues 26–61 (PANNSAASSSSSSSTSTSASSSAAAVPRKAAAASAA) show a composition bias toward low complexity. The span at 62–74 (DDSDSDEDIDQLI) shows a compositional bias: acidic residues. The chain crosses the membrane as a helical span at residues 145–165 (FLMFFVGPIQFVMEAAAILAA). Residues 166 to 169 (GLSD) are Extracellular-facing. A helical transmembrane segment spans residues 170-189 (WVDVGVICALLLLNASVGFI). The Cytoplasmic portion of the chain corresponds to 190 to 320 (QEFQAGSIVD…VEGHFTEVLN (131 aa)). Residues 321–342 (GIGIILLVLVIATLLLVWTACF) form a helical membrane-spanning segment. Residues 343 to 353 (YRTVGIVSILR) lie on the Extracellular side of the membrane. A helical transmembrane segment spans residues 354–376 (YTLGITIIGVPVGLPAVVTTTMA). Over 377 to 748 (VGAAYLAKKQ…IAILNNSLDI (372 aa)) the chain is Cytoplasmic. The active-site 4-aspartylphosphate intermediate is the D407. D663 and D667 together coordinate Mg(2+). Residues 749–767 (NLIVFIAIFADVATLTIAY) form a helical membrane-spanning segment. The Extracellular segment spans residues 768-783 (DNAPYAPEPVKWNLPR). Residues 784–803 (LWGMSIILGIVLAIGSWITL) form a helical membrane-spanning segment. At 804–853 (TTMFLPNGGIIQNFGAMNGVMFLQISLTENWLIFVTRAAGPFWSSIPSWQ) the chain is on the cytoplasmic side. The helical transmembrane segment at 854 to 874 (LAGAVFAVDIIATMFTLFGWW) threads the bilayer. The Extracellular segment spans residues 875–886 (SENWTDIVSVVR). A helical membrane pass occupies residues 887–903 (VWIWSIGIFCVLGGFYY). The Cytoplasmic portion of the chain corresponds to 904–947 (IMSTSQAFDRLMNGKSLKEKKSTRSVEDFMAAMQRVSTQHEKSS).

The protein belongs to the cation transport ATPase (P-type) (TC 3.A.3) family. Type IIIA subfamily.

It localises to the cell membrane. The catalysed reaction is ATP + H2O + H(+)(in) = ADP + phosphate + 2 H(+)(out). The plasma membrane ATPase of plants and fungi is a hydrogen ion pump. The proton gradient it generates drives the active transport of nutrients by H(+)-symport. The resulting external acidification and/or internal alkinization may mediate growth responses. This chain is Plasma membrane ATPase 2 (PMA2), found in Saccharomyces cerevisiae (strain ATCC 204508 / S288c) (Baker's yeast).